Reading from the N-terminus, the 101-residue chain is uncharacterized protein (101 aa).

A disordered region spans residues 76 to 101 (KGNVTRRRKKTHLGNDDGKKEAQEKM). Positions 88–101 (LGNDDGKKEAQEKM) are enriched in basic and acidic residues.

This is an uncharacterized protein from Homo sapiens (Human).